The primary structure comprises 417 residues: Serine hydroxymethyltransferase (417 aa).

(6S)-5,6,7,8-tetrahydrofolate is bound by residues Leu121 and 125-127 (GHL). Residue Lys229 is modified to N6-(pyridoxal phosphate)lysine. 355–357 (SPF) provides a ligand contact to (6S)-5,6,7,8-tetrahydrofolate.

Belongs to the SHMT family. As to quaternary structure, homodimer. The cofactor is pyridoxal 5'-phosphate.

The protein resides in the cytoplasm. The enzyme catalyses (6R)-5,10-methylene-5,6,7,8-tetrahydrofolate + glycine + H2O = (6S)-5,6,7,8-tetrahydrofolate + L-serine. It functions in the pathway one-carbon metabolism; tetrahydrofolate interconversion. Its pathway is amino-acid biosynthesis; glycine biosynthesis; glycine from L-serine: step 1/1. Functionally, catalyzes the reversible interconversion of serine and glycine with tetrahydrofolate (THF) serving as the one-carbon carrier. This reaction serves as the major source of one-carbon groups required for the biosynthesis of purines, thymidylate, methionine, and other important biomolecules. Also exhibits THF-independent aldolase activity toward beta-hydroxyamino acids, producing glycine and aldehydes, via a retro-aldol mechanism. The chain is Serine hydroxymethyltransferase from Stenotrophomonas maltophilia (strain R551-3).